Here is a 626-residue protein sequence, read N- to C-terminus: Basic helix-loop-helix ARNT-like protein 1 (626 aa).

Residues 1–60 form a disordered region; sequence MADQRMDISSTISDFMSPGPTDLLSSSLGTSGVDCNRKRKGSSTDYQESMDTDKDDPHGR. Ser-17 carries the phosphoserine; by GSK3-beta modification. Residues 17 to 32 are compositionally biased toward low complexity; sequence SPGPTDLLSSSLGTSG. A Phosphothreonine; by GSK3-beta modification is found at Thr-21. Residues 36–41 carry the Nuclear localization signal motif; sequence NRKRKG. Residues 51–60 are compositionally biased toward basic and acidic residues; it reads DTDKDDPHGR. The bHLH domain occupies 72 to 125; sequence NAREAHSQIEKRRRDKMNSFIDELASLVPTCNAMSRKLDKLTVLRMAVQHMKTL. Position 78 is a phosphoserine (Ser-78). At Ser-90 the chain carries Phosphoserine; by CK2. The Nuclear export signal 1 motif lies at 142–152; that stretch reads LSDDELKHLIL. The 73-residue stretch at 143–215 folds into the PAS 1 domain; it reads SDDELKHLIL…EQLSSSDTAP (73 aa). Residue Lys-252 forms a Glycyl lysine isopeptide (Lys-Gly) (interchain with G-Cter in SUMO2 and SUMO3) linkage. Lys-259 participates in a covalent cross-link: Glycyl lysine isopeptide (Lys-Gly) (interchain with G-Cter in SUMO2). The PAS 2 domain maps to 326–396; it reads PQPVNGEIRV…ECHRQVLQTR (71 aa). The short motif at 361–369 is the Nuclear export signal 2 element; that stretch reads LAYLPQELL. Residues 401-444 form the PAC domain; that stretch reads TNCYKFKIKDGSFITLRSRWFSFMNPWTKEVEYIVSTNTVVLAN. Disordered stretches follow at residues 458–493 and 511–595; these read ASPHSMDSMLPSGEGGPKRTHPTVPGIPGGTRAGAG and GSSP…SPSN. Gly residues predominate over residues 484-493; the sequence is IPGGTRAGAG. The tract at residues 508–588 is interaction with CIART; sequence RIRGSSPSSC…IGIDMIDNDQ (81 aa). A compositionally biased stretch (low complexity) spans 511-521; it reads GSSPSSCGSSP. Lys-538 carries the post-translational modification N6-acetyllysine.

Component of the circadian clock oscillator which includes the CRY1/2 proteins, CLOCK or NPAS2,BMAL1 or BMAL2, CSNK1D and/or CSNK1E, TIMELESS and the PER1/2/3 proteins. Forms a heterodimer with CLOCK. The CLOCK-BMAL1 heterodimer is required for E-box-dependent transactivation, for CLOCK nuclear translocation and degradation, and, for phosphorylation of both CLOCK and BMAL1. Part of a nuclear complex which also includes RACK1 and PRKCA; RACK1 and PRKCA are recruited to the complex in a circadian manner. Interacts with NPAS2. Interacts with EZH2. Interacts with SUMO3. Interacts with SIRT1. Interacts with AHR. Interacts with ID1, ID2 and ID3. Interacts with DDX4. Interacts with OGT. Interacts with EED and SUZ12. Interacts with MTA1. Interacts with CIART. Interacts with HSP90. Interacts with KAT2B and EP300. Interacts with BHLHE40/DEC1 and BHLHE41/DEC2. Interacts with RELB and the interaction is enhanced in the presence of CLOCK. Interacts with PER1, PER2, CRY1 and CRY2 and this interaction requires a translocation to the nucleus. Interaction of the CLOCK-BMAL1 heterodimer with PER or CRY inhibits transcription activation. Interaction of the CLOCK-BMAL1 with CRY1 is independent of DNA but with PER2 is off DNA. The CLOCK-BMAL1 heterodimer interacts with GSK3B. Interacts with KDM5A. Interacts with KMT2A; in a circadian manner. Interacts with UBE3A. Interacts with PRKCG. Interacts with MAGEL2. Interacts with NCOA2. Interacts with THRAP3. The CLOCK-BMAL1 heterodimer interacts with PASD1. Interacts with PASD1. Interacts with USP9X. Interacts with PIWIL2 (via PIWI domain). Interacts with HDAC3. Interacts with HNF4A. Post-translationally, ubiquitinated, leading to its proteasomal degradation. Deubiquitinated by USP9X. O-glycosylated; contains O-GlcNAc. O-glycosylation by OGT prevents protein degradation by inhibiting ubiquitination. It also stabilizes the CLOCK-BMAL1 heterodimer thereby increasing CLOCK-BMAL1-mediated transcription of genes in the negative loop of the circadian clock such as PER1/2/3 and CRY1/2. In terms of processing, acetylated on Lys-538 by CLOCK during the repression phase of the circadian cycle. Acetylation facilitates recruitment of CRY1 protein and initiates the repression phase of the circadian cycle. Acetylated at Lys-538 by KAT5 during the activation phase of the cycle, leading to recruitment of the positive transcription elongation factor b (P-TEFb) and BRD4, followed by productive elongation of circadian transcripts. Deacetylated by SIRT1, which may result in decreased protein stability. Post-translationally, phosphorylated upon dimerization with CLOCK. Phosphorylation enhances the transcriptional activity, alters the subcellular localization and decreases the stability of the CLOCK-BMAL1 heterodimer by promoting its degradation. Phosphorylation shows circadian variations in the liver with a peak between CT10 to CT14. Phosphorylation at Ser-90 by CK2 is essential for its nuclear localization, its interaction with CLOCK and controls CLOCK nuclear entry. Dephosphorylation at Ser-78 is important for dimerization with CLOCK and transcriptional activity. Sumoylated on Lys-259 upon dimerization with CLOCK. Predominantly conjugated to poly-SUMO2/3 rather than SUMO1 and the level of these conjugates undergo rhythmic variation, peaking at CT9-CT12. Sumoylation localizes it exclusively to the PML body and promotes its ubiquitination in the PML body, ubiquitin-dependent proteasomal degradation and the transcriptional activity of the CLOCK-BMAL1 heterodimer. In terms of processing, undergoes lysosome-mediated degradation in a time-dependent manner in the liver. In terms of tissue distribution, hair follicles (at protein level). Highly expressed in the adult brain, skeletal muscle and heart.

It localises to the nucleus. It is found in the cytoplasm. The protein resides in the PML body. There is conflicting data about the effect of NAD cofactors on activity. PubMed:11441146 suggests that the redox state of the cell can modulate the transcriptional activity of the CLOCK-BMAL1 heterodimer; NADH and NADPH enhance the DNA-binding activity of the heterodimer. PubMed:23229515 reports that NADH and NADPH have no significant effect on DNA-binding activity of the CLOCK-BMAL1 heterodimer. Functionally, transcriptional activator which forms a core component of the circadian clock. The circadian clock, an internal time-keeping system, regulates various physiological processes through the generation of approximately 24 hour circadian rhythms in gene expression, which are translated into rhythms in metabolism and behavior. It is derived from the Latin roots 'circa' (about) and 'diem' (day) and acts as an important regulator of a wide array of physiological functions including metabolism, sleep, body temperature, blood pressure, endocrine, immune, cardiovascular, and renal function. Consists of two major components: the central clock, residing in the suprachiasmatic nucleus (SCN) of the brain, and the peripheral clocks that are present in nearly every tissue and organ system. Both the central and peripheral clocks can be reset by environmental cues, also known as Zeitgebers (German for 'timegivers'). The predominant Zeitgeber for the central clock is light, which is sensed by retina and signals directly to the SCN. The central clock entrains the peripheral clocks through neuronal and hormonal signals, body temperature and feeding-related cues, aligning all clocks with the external light/dark cycle. Circadian rhythms allow an organism to achieve temporal homeostasis with its environment at the molecular level by regulating gene expression to create a peak of protein expression once every 24 hours to control when a particular physiological process is most active with respect to the solar day. Transcription and translation of core clock components (CLOCK, NPAS2, BMAL1, BMAL2, PER1, PER2, PER3, CRY1 and CRY2) plays a critical role in rhythm generation, whereas delays imposed by post-translational modifications (PTMs) are important for determining the period (tau) of the rhythms (tau refers to the period of a rhythm and is the length, in time, of one complete cycle). A diurnal rhythm is synchronized with the day/night cycle, while the ultradian and infradian rhythms have a period shorter and longer than 24 hours, respectively. Disruptions in the circadian rhythms contribute to the pathology of cardiovascular diseases, cancer, metabolic syndromes and aging. A transcription/translation feedback loop (TTFL) forms the core of the molecular circadian clock mechanism. Transcription factors, CLOCK or NPAS2 and BMAL1 or BMAL2, form the positive limb of the feedback loop, act in the form of a heterodimer and activate the transcription of core clock genes and clock-controlled genes (involved in key metabolic processes), harboring E-box elements (5'-CACGTG-3') within their promoters. The core clock genes: PER1/2/3 and CRY1/2 which are transcriptional repressors form the negative limb of the feedback loop and interact with the CLOCK|NPAS2-BMAL1|BMAL2 heterodimer inhibiting its activity and thereby negatively regulating their own expression. This heterodimer also activates nuclear receptors NR1D1/2 and RORA/B/G, which form a second feedback loop and which activate and repress BMAL1 transcription, respectively. BMAL1 positively regulates myogenesis and negatively regulates adipogenesis via the transcriptional control of the genes of the canonical Wnt signaling pathway. Plays a role in normal pancreatic beta-cell function; regulates glucose-stimulated insulin secretion via the regulation of antioxidant genes NFE2L2/NRF2 and its targets SESN2, PRDX3, CCLC and CCLM. Negatively regulates the mTORC1 signaling pathway; regulates the expression of MTOR and DEPTOR. Controls diurnal oscillations of Ly6C inflammatory monocytes; rhythmic recruitment of the PRC2 complex imparts diurnal variation to chemokine expression that is necessary to sustain Ly6C monocyte rhythms. Regulates the expression of HSD3B2, STAR, PTGS2, CYP11A1, CYP19A1 and LHCGR in the ovary and also the genes involved in hair growth. Plays an important role in adult hippocampal neurogenesis by regulating the timely entry of neural stem/progenitor cells (NSPCs) into the cell cycle and the number of cell divisions that take place prior to cell-cycle exit. Regulates the circadian expression of CIART and KLF11. The CLOCK-BMAL1 heterodimer regulates the circadian expression of SERPINE1/PAI1, VWF, B3, CCRN4L/NOC, NAMPT, DBP, MYOD1, PPARGC1A, PPARGC1B, SIRT1, GYS2, F7, NGFR, GNRHR, BHLHE40/DEC1, ATF4, MTA1, KLF10 and also genes implicated in glucose and lipid metabolism. Promotes rhythmic chromatin opening, regulating the DNA accessibility of other transcription factors. The NPAS2-BMAL1 heterodimer positively regulates the expression of MAOA, F7 and LDHA and modulates the circadian rhythm of daytime contrast sensitivity by regulating the rhythmic expression of adenylate cyclase type 1 (ADCY1) in the retina. The preferred binding motif for the CLOCK-BMAL1 heterodimer is 5'-CACGTGA-3', which contains a flanking adenine nucleotide at the 3-prime end of the canonical 6-nucleotide E-box sequence. CLOCK specifically binds to the half-site 5'-CAC-3', while BMAL1 binds to the half-site 5'-GTGA-3'. The CLOCK-BMAL1 heterodimer also recognizes the non-canonical E-box motifs 5'-AACGTGA-3' and 5'-CATGTGA-3'. Essential for the rhythmic interaction of CLOCK with ASS1 and plays a critical role in positively regulating CLOCK-mediated acetylation of ASS1. Plays a role in protecting against lethal sepsis by limiting the expression of immune checkpoint protein CD274 in macrophages in a PKM2-dependent manner. Regulates the diurnal rhythms of skeletal muscle metabolism via transcriptional activation of genes promoting triglyceride synthesis (DGAT2) and metabolic efficiency (COQ10B). (Microbial infection) Regulates SARS coronavirus-2/SARS-CoV-2 entry and replication in lung epithelial cells probably through the post-transcriptional regulation of ACE2 and interferon-stimulated gene expression. The chain is Basic helix-loop-helix ARNT-like protein 1 from Homo sapiens (Human).